Reading from the N-terminus, the 762-residue chain is Lysyl oxidase homolog 2B (762 aa).

Residues 1-20 form the signal peptide; sequence MLALWSISFVLLCSWRLSYA. SRCR domains follow at residues 53–154, 183–292, 316–417, and 427–536; these read LRLA…VVCS, IRPI…VSCI, VRLR…VKCN, and LRLS…VSCS. 9 disulfides stabilise this stretch: C79–C143, C92–C153, C123–C133, C213–C281, C226–C291, C260–C270, C341–C406, C354–C416, and C385–C395. N278 is a glycosylation site (N-linked (GlcNAc...) asparagine). N-linked (GlcNAc...) asparagine glycosylation occurs at N447. 3 cysteine pairs are disulfide-bonded: C456–C522, C469–C535, and C503–C513. The tract at residues 540–742 is lysyl-oxidase like; the sequence is PDLVLNPQVV…WMYNCHIGGS (203 aa). Residues D541 and L542 each coordinate Ca(2+). Intrachain disulfides connect C565-C616, C571-C686, C648-C664, and C654-C676. H617, H619, and H621 together coordinate Cu cation. N635 carries N-linked (GlcNAc...) asparagine glycosylation. The segment at residues 644–680 is a cross-link (lysine tyrosylquinone (Lys-Tyr)); the sequence is KASFCLEDSECDEGIEKRYECANFGEQGITVGCWDTY. At Y680 the chain carries 2',4',5'-topaquinone. Ca(2+) is bound by residues E713, D715, N718, and N719. A disulfide bond links C723 and C737.

This sequence belongs to the lysyl oxidase family. Cu cation serves as cofactor. Lysine tyrosylquinone residue is required as a cofactor. Post-translationally, the lysine tyrosylquinone cross-link (LTQ) is generated by condensation of the epsilon-amino group of a lysine with a topaquinone produced by oxidation of tyrosine.

It is found in the secreted. The protein localises to the extracellular space. It localises to the extracellular matrix. The protein resides in the basement membrane. Its subcellular location is the nucleus. It is found in the chromosome. The protein localises to the endoplasmic reticulum. The catalysed reaction is L-lysyl-[protein] + O2 + H2O = (S)-2-amino-6-oxohexanoyl-[protein] + H2O2 + NH4(+). Its function is as follows. Mediates the post-translational oxidative deamination of lysine residues on target proteins leading to the formation of deaminated lysine (allysine). Acts as a transcription corepressor and specifically mediates deamination of trimethylated 'Lys-4' of histone H3 (H3K4me3), a specific tag for epigenetic transcriptional activation. Shows no activity against histone H3 when it is trimethylated on 'Lys-9' (H3K9me3) or 'Lys-27' (H3K27me3) or when 'Lys-4' is monomethylated (H3K4me1) or dimethylated (H3K4me2). Also mediates deamination of methylated TAF10, a member of the transcription factor IID (TFIID) complex, which induces release of TAF10 from promoters, leading to inhibition of TFIID-dependent transcription. LOXL2-mediated deamination of TAF10 results in transcriptional repression of genes required for embryonic stem cell pluripotency. Involved in epithelial to mesenchymal transition (EMT) and participates in repression of E-cadherin, probably by mediating deamination of histone H3. When secreted into the extracellular matrix, promotes cross-linking of extracellular matrix proteins by mediating oxidative deamination of peptidyl lysine residues in precursors to fibrous collagen and elastin. Acts as a regulator of sprouting angiogenesis, probably via collagen IV scaffolding. Acts as a regulator of chondrocyte differentiation, probably by regulating expression of factors that control chondrocyte differentiation. Required with loxl2a for correct expression of Sox2 and for neural differentiation. This Danio rerio (Zebrafish) protein is Lysyl oxidase homolog 2B (loxl2b).